We begin with the raw amino-acid sequence, 1070 residues long: MSTSLLFEQLNFLILVAAEAELPIAHSTRKLLMDNSCNNCQIYELYNENLKDVKTDKDWFMNKFGPQTVHFVISNTINFPFYKIVYFDLLIPVVSHTWVQDSVKTKRHLRTNMYSPNPFHLLRDCQVYISKSSFNKCEYILYSDLLHLLGGTLVNYISNRTTHVIVQSPQDPIIATVSKLTFGSFSSSSTNKHTEKPLREWKFVYPIWILYHFKMAKPLKGELATLCELDMQDTSEEQLFAKWEEVIGDKQTSSSQLTLHPNKTLFKNHHFAISPDLNFFTPLYWFLKGFIEDLDGKVTPLSFSDDLKSVYQAFPDIDCYIGHSANSPILEKTKSIKPEIHVGNVSWLFYMFALQKFTPVSQCKLIHQPFHAKLFTSKELTVAYTNYFGSQRFYIQRLVEILGGLSTPELTRKNTHLITKSTIGKKFKVAKKWSLDPQNAIIVTNHMWLEQCYMNNSKLNPKDSRFQNFKLDDNMGWNIGQIGMDHSSLPTPKNLSMVTYDTQSISEKPPPTNDQMDQINDNTNVLSKKDGTPISSFENSIDEKIDKLQKISGEVAVTHSGDLERSFVSRPSRASFPVVDSKKSNLQKKDSNSDISMETEVFCEGHEKREEKEFTKPITEYDAPKKQEIREQSRKKNDIDYKKEEEETELQVQLGQRTKREIKTSKKNEKEKETNECHIEVDQMTNEKQGEESTGKLISTEDVTSKKDTDKFSHLFEGLSDNDDHINDEKPAVNSKYTTPKTSQNITSGVDTPTTAQTQVFMPSSGNSRLAKTQAAKRLHTDIESLNEFQKNFKRKRIDSEEISLSQDVERSNNNKELATKAEKILARFNELPNYDLKAVCTGCFHDGFNEVDIEILNQLGIKIFDNIKETDKLNCIFAPKILRTEKFLKSLSFEPLKFALKPEFIIDLLKQIHSKKDKLSQININLFDYEINGINESIISKTKLPTKVFERANIRCINLVNDIPGGVDTIGSVLKAHGIEKINVLRSKKCTFEDIIPNDVSKQENGGIFKYVLIVTKASQVKKFTKLINDRDKNETILIVEWNWCVESIFHLNVDFTSKKNVLYQKKNN.

4 consecutive BRCT domains span residues 2–103 (STSL…QDSV), 117–213 (NPFH…LYHF), 260–352 (HPNK…FYMF), and 369–453 (PFHA…EQCY). A Phosphoserine modification is found at S304. T532 is subject to Phosphothreonine. The tract at residues 572 to 659 (SRASFPVVDS…LQVQLGQRTK (88 aa)) is disordered. A compositionally biased stretch (basic and acidic residues) spans 580–592 (DSKKSNLQKKDSN). 2 positions are modified to phosphoserine: S591 and S593. Basic and acidic residues-rich tracts occupy residues 603–615 (CEGH…KEFT) and 622–645 (DAPK…KKEE). S720 bears the Phosphoserine mark. The segment covering 722-731 (NDDHINDEKP) has biased composition (basic and acidic residues). Positions 722–753 (NDDHINDEKPAVNSKYTTPKTSQNITSGVDTP) are disordered. Positions 735-753 (SKYTTPKTSQNITSGVDTP) are enriched in polar residues. Phosphoserine occurs at positions 800 and 806. BRCT domains lie at 829-910 (FNEL…IDLL) and 934-1049 (GINE…CVES).

In terms of assembly, forms a complex with the cullin-RING ligase (CRL) RTT101(MMS1-MMS22). Interacts with MMS22 and RTT101. Interacts with histone H2A; requires H2A to be phosphorylated (gamma-H2A). Interacts with RAD55. Phosphorylated by MEC1.

The protein resides in the nucleus. In terms of biological role, required for resumption of chromosome replication after DNA damage, specifically in S phase. Is recruited to chromatin in the presence of RTT109 and RTT101 in response to stalled replication forks and acts as a scaffold during DNA repair. In Saccharomyces cerevisiae (strain ATCC 204508 / S288c) (Baker's yeast), this protein is Regulator of Ty1 transposition protein 107 (RTT107).